Here is a 1053-residue protein sequence, read N- to C-terminus: Zinc finger and BTB domain-containing protein 11 (1053 aa).

Positions 141–156 (LDLESGEESNESEDDL) are enriched in acidic residues. The tract at residues 141 to 173 (LDLESGEESNESEDDLSNFTSSPTTASKPAKKK) is disordered. Residues 157 to 168 (SNFTSSPTTASK) are compositionally biased toward low complexity. The BTB domain maps to 214 to 282 (CDVTLLIEGE…AYTSVLSFDF (69 aa)). Residues 546-566 (LVQRGKKMKQPKRDAKENTEE) are disordered. The segment covering 556–566 (PKRDAKENTEE) has biased composition (basic and acidic residues). C2H2-type zinc fingers lie at residues 569-591 (HKCGECGMVFQRRYALIMHKLKH) and 597-619 (YKCPLCKKQFQYSASLRAHLIRH). The segment at 619 to 643 (HTRKDAPSSSSSNSTSNEASGTSSE) is disordered. The segment covering 626 to 642 (SSSSSNSTSNEASGTSS) has biased composition (low complexity). 10 consecutive C2H2-type zinc fingers follow at residues 651-673 (FICSICGRTLPKLYSLRIHMLKH), 679-701 (HACQVCGKTFIYKHGLKLHQSLH), 707-729 (FQCELCVKSFVTKRSLQEHMSIH), 735-757 (YLCSVCGKSFHRGSGLSKHFKKH), 766-788 (YHCTQCEKSFFEARDLRQHMNKH), 794-816 (FQCQFCDKCYSWKKDWYSHVKSH), 822-846 (YRCNICGKEFYEKALFRRHVKKATH), 858-880 (RVCEKCGRKFTQLREYRRHMNNH), 886-908 (FECLTCGVAWADARSLKRHVRTH), and 914-937 (YVCPVCSEAYIDARTLRKHMTKFH). Lys-1043 participates in a covalent cross-link: Glycyl lysine isopeptide (Lys-Gly) (interchain with G-Cter in SUMO2). At Ser-1050 the chain carries Phosphoserine.

It localises to the nucleus. It is found in the nucleolus. May be involved in transcriptional regulation. The chain is Zinc finger and BTB domain-containing protein 11 from Homo sapiens (Human).